The primary structure comprises 341 residues: Glucokinase (341 aa).

Residue 18-23 participates in ATP binding; it reads GDIGGT.

This sequence belongs to the bacterial glucokinase family.

It localises to the cytoplasm. The enzyme catalyses D-glucose + ATP = D-glucose 6-phosphate + ADP + H(+). This chain is Glucokinase, found in Rhizobium johnstonii (strain DSM 114642 / LMG 32736 / 3841) (Rhizobium leguminosarum bv. viciae).